A 459-amino-acid chain; its full sequence is Putrescine aminotransferase (459 aa).

Pyridoxal 5'-phosphate contacts are provided by residues 150–151 (GT) and glutamine 274. Position 300 is an N6-(pyridoxal phosphate)lysine (lysine 300). Threonine 332 provides a ligand contact to pyridoxal 5'-phosphate.

It belongs to the class-III pyridoxal-phosphate-dependent aminotransferase family. Putrescine aminotransferase subfamily. The cofactor is pyridoxal 5'-phosphate.

It catalyses the reaction an alkane-alpha,omega-diamine + 2-oxoglutarate = an omega-aminoaldehyde + L-glutamate. The enzyme catalyses putrescine + 2-oxoglutarate = 1-pyrroline + L-glutamate + H2O. The catalysed reaction is cadaverine + 2-oxoglutarate = 5-aminopentanal + L-glutamate. It functions in the pathway amine and polyamine degradation; putrescine degradation; 4-aminobutanal from putrescine (transaminase route): step 1/1. In terms of biological role, catalyzes the aminotransferase reaction from putrescine to 2-oxoglutarate, leading to glutamate and 4-aminobutanal, which spontaneously cyclizes to form 1-pyrroline. This is the first step in one of two pathways for putrescine degradation, where putrescine is converted into 4-aminobutanoate (gamma-aminobutyrate or GABA) via 4-aminobutanal. Also functions as a cadaverine transaminase in a a L-lysine degradation pathway to succinate that proceeds via cadaverine, glutarate and L-2-hydroxyglutarate. This is Putrescine aminotransferase from Escherichia fergusonii (strain ATCC 35469 / DSM 13698 / CCUG 18766 / IAM 14443 / JCM 21226 / LMG 7866 / NBRC 102419 / NCTC 12128 / CDC 0568-73).